The following is a 466-amino-acid chain: Histidinol dehydrogenase, chloroplastic (466 aa).

Residues 1–30 constitute a chloroplast transit peptide; the sequence is MSLNLSRLSLLSSPRISISTHAPRKGYVCC. NAD(+) contacts are provided by Tyr155, Gln217, and Asn240. Substrate-binding residues include Ser266, Gln288, and His291. Residues Gln288 and His291 each contribute to the Zn(2+) site. Residues Glu356 and His357 each act as proton acceptor in the active site. Substrate contacts are provided by His357, Asp390, Glu444, and His449. Residue Asp390 participates in Zn(2+) binding. His449 is a binding site for Zn(2+).

It belongs to the histidinol dehydrogenase family. Zn(2+) is required as a cofactor.

The protein resides in the plastid. Its subcellular location is the chloroplast. It catalyses the reaction L-histidinol + 2 NAD(+) + H2O = L-histidine + 2 NADH + 3 H(+). It functions in the pathway amino-acid biosynthesis; L-histidine biosynthesis; L-histidine from 5-phospho-alpha-D-ribose 1-diphosphate: step 9/9. Functionally, catalyzes the sequential NAD-dependent oxidations of L-histidinol to L-histidinaldehyde and then to L-histidine. The protein is Histidinol dehydrogenase, chloroplastic (HISN8) of Arabidopsis thaliana (Mouse-ear cress).